The primary structure comprises 240 residues: MGKRLISQNRGRGTPKYRSPTHKRKGAVKYRSYDEMEKDGKILGTVVDILHDPGRSAPVAKVRFANDEERLVLIPEGIQVGEEIECGISAEIKPGNVLPLGEIPEGIPVYNIETIPGDGGKLVRSGGCYAHVISHDVGKTIVKLPSGFSKVLNPACRATVGVVAGGGRKEKPFVKAGKKYHSLSAKAVAWPKVRGVAMNAVDHPYGGGRHQHLGKPSSVSRHTSPGRKVGHIASRRTGRK.

Residues 1-11 (MGKRLISQNRG) show a composition bias toward polar residues. Disordered stretches follow at residues 1 to 28 (MGKRLISQNRGRGTPKYRSPTHKRKGAV) and 206 to 240 (GGGRHQHLGKPSSVSRHTSPGRKVGHIASRRTGRK). Composition is skewed to basic residues over residues 13-28 (GTPKYRSPTHKRKGAV) and 224-240 (SPGRKVGHIASRRTGRK).

Belongs to the universal ribosomal protein uL2 family. Part of the 50S ribosomal subunit. Forms a bridge to the 30S subunit in the 70S ribosome.

In terms of biological role, one of the primary rRNA binding proteins. Required for association of the 30S and 50S subunits to form the 70S ribosome, for tRNA binding and peptide bond formation. It has been suggested to have peptidyltransferase activity; this is somewhat controversial. Makes several contacts with the 16S rRNA in the 70S ribosome. This chain is Large ribosomal subunit protein uL2, found in Methanococcus maripaludis (strain C5 / ATCC BAA-1333).